The primary structure comprises 231 residues: Ribonuclease HI (231 aa).

The RNase H type-1 domain maps to 1–146; the sequence is MRERAVAACD…ADRAASQAAV (146 aa). 4 residues coordinate Mg(2+): Asp10, Glu50, Asp72, and Asp138. Composition is skewed to low complexity over residues 148-157 and 166-181; these read QEAAGSALGS and VPAA…SGAA. Disordered regions lie at residues 148 to 192 and 212 to 231; these read QEAA…SART and PIAK…VAAG.

Belongs to the RNase H family. As to quaternary structure, monomer. Mg(2+) serves as cofactor.

The protein resides in the cytoplasm. It catalyses the reaction Endonucleolytic cleavage to 5'-phosphomonoester.. In terms of biological role, endonuclease that specifically degrades the RNA of RNA-DNA hybrids. The sequence is that of Ribonuclease HI (rnhA) from Streptomyces coelicolor (strain ATCC BAA-471 / A3(2) / M145).